Here is a 106-residue protein sequence, read N- to C-terminus: Large ribosomal subunit protein uL24 (106 aa).

The protein belongs to the universal ribosomal protein uL24 family. As to quaternary structure, part of the 50S ribosomal subunit.

Its function is as follows. One of two assembly initiator proteins, it binds directly to the 5'-end of the 23S rRNA, where it nucleates assembly of the 50S subunit. In terms of biological role, one of the proteins that surrounds the polypeptide exit tunnel on the outside of the subunit. This is Large ribosomal subunit protein uL24 from Paramagnetospirillum magneticum (strain ATCC 700264 / AMB-1) (Magnetospirillum magneticum).